The chain runs to 156 residues: Putative NrdI-like protein (156 aa).

It belongs to the NrdI family.

The polypeptide is Putative NrdI-like protein (Streptococcus pneumoniae serotype 4 (strain ATCC BAA-334 / TIGR4)).